We begin with the raw amino-acid sequence, 355 residues long: MEPHLLGLLLGLLLSGTRVLAGYPIWWSLALGQQYTSLASQPLLCGSIPGLVPKQLRFCRNYIEIMPSVAEGVKLGIQECQHQFRGRRWNCTTIDDSLAIFGPVLDKATRESAFVHAIASAGVAFAVTRSCAEGTSTICGCDSHHKGPPGEGWKWGGCSEDADFGVLVSREFADARENRPDARSAMNKHNNEAGRTTILDHMHLKCKCHGLSGSCEVKTCWWAQPDFRAIGDFLKDKYDSASEMVVEKHRESRGWVETLRAKYALFKPPTERDLVYYENSPNFCEPNPETGSFGTRDRTCNVTSHGIDGCDLLCCGRGHNTRTEKRKEKCHCVFHWCCYVSCQECIRIYDVHTCK.

The N-terminal stretch at 1 to 21 (MEPHLLGLLLGLLLSGTRVLA) is a signal peptide. Intrachain disulfides connect Cys-80-Cys-91, Cys-131-Cys-139, Cys-141-Cys-158, Cys-206-Cys-220, Cys-208-Cys-215, Cys-284-Cys-315, Cys-300-Cys-310, Cys-314-Cys-354, Cys-330-Cys-345, Cys-332-Cys-342, and Cys-337-Cys-338. Residue Asn-90 is glycosylated (N-linked (GlcNAc...) asparagine). Residue Ser-212 is the site of O-palmitoleoyl serine; by PORCN attachment. Asn-301 carries N-linked (GlcNAc...) asparagine glycosylation.

It belongs to the Wnt family. Forms a soluble 1:1 complex with AFM; this prevents oligomerization and is required for prolonged biological activity. The complex with AFM may represent the physiological form in body fluids. Interacts with PORCN. Interacts with WLS. In terms of processing, palmitoleoylation is required for efficient binding to frizzled receptors. Depalmitoleoylation leads to Wnt signaling pathway inhibition. Detected at low levels in adult brain. Dorsal portion of the neural tube, dorsal ectoderm, the branchial arches, and the limb buds.

The protein localises to the secreted. Its subcellular location is the extracellular space. The protein resides in the extracellular matrix. Its function is as follows. Ligand for members of the frizzled family of seven transmembrane receptors. Functions in the canonical Wnt signaling pathway that results in activation of transcription factors of the TCF/LEF family. Required for normal gastrulation, formation of the primitive streak, and for the formation of the mesoderm during early embryogenesis. Required for normal formation of the apical ectodermal ridge and for normal embryonic limb development. The protein is Proto-oncogene Wnt-3 (Wnt3) of Mus musculus (Mouse).